Here is a 206-residue protein sequence, read N- to C-terminus: Large ribosomal subunit protein mL40 (206 aa).

The N-terminal 46 residues, M1–R46, are a transit peptide targeting the mitochondrion. The tract at residues P170–G190 is disordered.

It belongs to the mitochondrion-specific ribosomal protein mL40 family. As to quaternary structure, component of the mitochondrial ribosome large subunit (39S) which comprises a 16S rRNA and about 50 distinct proteins.

The protein localises to the mitochondrion. The sequence is that of Large ribosomal subunit protein mL40 (Mrpl40) from Rattus norvegicus (Rat).